The following is an 881-amino-acid chain: Phosphoenolpyruvate carboxylase (881 aa).

Active-site residues include histidine 138 and lysine 545.

The protein belongs to the PEPCase type 1 family. Mg(2+) is required as a cofactor.

It carries out the reaction oxaloacetate + phosphate = phosphoenolpyruvate + hydrogencarbonate. Functionally, forms oxaloacetate, a four-carbon dicarboxylic acid source for the tricarboxylic acid cycle. The polypeptide is Phosphoenolpyruvate carboxylase (Shewanella oneidensis (strain ATCC 700550 / JCM 31522 / CIP 106686 / LMG 19005 / NCIMB 14063 / MR-1)).